We begin with the raw amino-acid sequence, 271 residues long: Small ribosomal subunit protein uS2 (271 aa).

Residues 235–271 are disordered; sequence FDAKNPLKPQNYNAPNKRPYQDSPRKPSYQNQNQNQI. Residues 262–271 show a composition bias toward polar residues; the sequence is SYQNQNQNQI.

The protein belongs to the universal ribosomal protein uS2 family.

The sequence is that of Small ribosomal subunit protein uS2 from Onion yellows phytoplasma (strain OY-M).